Reading from the N-terminus, the 388-residue chain is Mannitol-1-phosphate 5-dehydrogenase (388 aa).

An NAD(+)-binding site is contributed by 5 to 16; the sequence is AIQFGGGNIGRG. K213 is an active-site residue.

Belongs to the mannitol dehydrogenase family. Monomer.

It catalyses the reaction D-mannitol 1-phosphate + NAD(+) = beta-D-fructose 6-phosphate + NADH + H(+). In terms of biological role, catalyzes the NAD(H)-dependent interconversion of D-fructose 6-phosphate and D-mannitol 1-phosphate in the mannitol metabolic pathway. This Aspergillus clavatus (strain ATCC 1007 / CBS 513.65 / DSM 816 / NCTC 3887 / NRRL 1 / QM 1276 / 107) protein is Mannitol-1-phosphate 5-dehydrogenase (mpdA).